A 185-amino-acid chain; its full sequence is Histone H1-delta (185 aa).

Disordered stretches follow at residues 1–37 and 90–185; these read MADT…PKYS and RHVK…GKKK. The H15 domain maps to 32–105; the sequence is SHPKYSDMIA…GASGSFLLAE (74 aa). Residues 109–185 show a composition bias toward basic residues; that stretch reads TPKKAAAKKA…KAAKGKGKKK (77 aa).

Belongs to the histone H1/H5 family.

The protein resides in the nucleus. Its subcellular location is the chromosome. Functionally, histones H1 are necessary for the condensation of nucleosome chains into higher-order structures. The protein is Histone H1-delta of Strongylocentrotus purpuratus (Purple sea urchin).